We begin with the raw amino-acid sequence, 470 residues long: FRIGIDA-like protein 1 (470 aa).

A coiled-coil region spans residues 336–369; sequence KDQNLESEFTQEKVEERVEELEKNKALRKRNTTN. Residues 355–400 are disordered; that stretch reads ELEKNKALRKRNTTNPPKQEPQQKGKKRTRDCKNGSQVPVPSQQLL. Residues 388-400 show a composition bias toward polar residues; the sequence is NGSQVPVPSQQLL.

It belongs to the Frigida family. Component of the transcription activator complex FRI-C composed of FRI, FRL1, SUF4, FLX and FES1. Interacts with FRI and SUF4. Expressed during seed development and in dry seed. Preferentially expressed in the chalazal endosperm during early stages of seed development.

Functionally, required for FRI-mediated up-regulation of FLC transcripts, but not redundant with FRI and only partially redundant with FRL2. Required for the stabilization of the FRI-C complex. In Arabidopsis thaliana (Mouse-ear cress), this protein is FRIGIDA-like protein 1 (FRL1).